Reading from the N-terminus, the 560-residue chain is Dihydroxy-acid dehydratase (560 aa).

Mg(2+) is bound at residue Asp-78. Residue Cys-119 participates in [2Fe-2S] cluster binding. Mg(2+) contacts are provided by Asp-120 and Lys-121. Lys-121 is subject to N6-carboxylysine. Position 192 (Cys-192) interacts with [2Fe-2S] cluster. Glu-446 is a binding site for Mg(2+). Ser-472 functions as the Proton acceptor in the catalytic mechanism.

It belongs to the IlvD/Edd family. In terms of assembly, homodimer. [2Fe-2S] cluster is required as a cofactor. Requires Mg(2+) as cofactor.

The catalysed reaction is (2R)-2,3-dihydroxy-3-methylbutanoate = 3-methyl-2-oxobutanoate + H2O. The enzyme catalyses (2R,3R)-2,3-dihydroxy-3-methylpentanoate = (S)-3-methyl-2-oxopentanoate + H2O. It participates in amino-acid biosynthesis; L-isoleucine biosynthesis; L-isoleucine from 2-oxobutanoate: step 3/4. The protein operates within amino-acid biosynthesis; L-valine biosynthesis; L-valine from pyruvate: step 3/4. Functions in the biosynthesis of branched-chain amino acids. Catalyzes the dehydration of (2R,3R)-2,3-dihydroxy-3-methylpentanoate (2,3-dihydroxy-3-methylvalerate) into 2-oxo-3-methylpentanoate (2-oxo-3-methylvalerate) and of (2R)-2,3-dihydroxy-3-methylbutanoate (2,3-dihydroxyisovalerate) into 2-oxo-3-methylbutanoate (2-oxoisovalerate), the penultimate precursor to L-isoleucine and L-valine, respectively. In Anaeromyxobacter dehalogenans (strain 2CP-C), this protein is Dihydroxy-acid dehydratase.